Reading from the N-terminus, the 457-residue chain is Polygalacturonase-2 (457 aa).

The first 24 residues, 1–24 (MVIQRNSILLLIIIFASSISTCRS), serve as a signal peptide directing secretion. Residues 25-71 (NVIDDNLFKQVYDNILEQEFAHDFQAYLSYLSKNIESNNNIDKVDKN) constitute a propeptide that is removed on maturation. N-linked (GlcNAc...) asparagine glycosylation is found at Asn189 and Asn240. 2 PbH1 repeats span residues 228–255 (SCTN…HVSN) and 256–277 (TQYI…SIVS). Residue Asp270 is the Proton donor of the active site. Asn286 carries N-linked (GlcNAc...) asparagine glycosylation. Residue His293 is part of the active site. PbH1 repeat units lie at residues 309–330 (VSNV…RIKT) and 338–359 (ASNI…IIDQ). An N-linked (GlcNAc...) asparagine glycan is attached at Asn311. Positions 445-457 (LEISEDEALLYNY) are excised as a propeptide.

The protein belongs to the glycosyl hydrolase 28 family. Monomer PG2 (isoenzymes PG2A and PG2B). Also forms heterodimers called polygalacturonase 1 (PG1) with the beta subunit GP1. In terms of processing, N-glycosylated. PG2B isozyme has a greater degree of glycosylation than PG2A. In terms of tissue distribution, expressed only in ripening fruits (at protein level).

The protein resides in the secreted. It is found in the extracellular space. Its subcellular location is the apoplast. The protein localises to the cell wall. It catalyses the reaction (1,4-alpha-D-galacturonosyl)n+m + H2O = (1,4-alpha-D-galacturonosyl)n + (1,4-alpha-D-galacturonosyl)m.. Catalytic subunit of the polygalacturonase isozyme 1 and 2 (PG1 and PG2). Acts in concert with the pectinesterase, in the ripening process. Is involved in cell wall metabolism, specifically in polyuronide degradation. The depolymerization and solubilization of cell wall polyuronides mediated by PG2 during ripening seems to be limited by the beta subunit GP1, probably by recruiting PG2 to form PG1. The chain is Polygalacturonase-2 (PG2) from Solanum lycopersicum (Tomato).